A 301-amino-acid polypeptide reads, in one-letter code: GTPase Era (301 aa).

Residues 7-175 (YCGFIAIVGR…AAIVRKHLPE (169 aa)) enclose the Era-type G domain. The interval 15-22 (GRPNVGKS) is G1. 15-22 (GRPNVGKS) is a binding site for GTP. Residues 41–45 (QTTRH) form a G2 region. A G3 region spans residues 62-65 (DTPG). GTP-binding positions include 62–66 (DTPGL) and 124–127 (NKVD). A G4 region spans residues 124 to 127 (NKVD). The G5 stretch occupies residues 154 to 156 (ISA). In terms of domain architecture, KH type-2 spans 206–283 (LGAELPYSVT…HLELWVKVKS (78 aa)).

This sequence belongs to the TRAFAC class TrmE-Era-EngA-EngB-Septin-like GTPase superfamily. Era GTPase family. Monomer.

The protein resides in the cytoplasm. It is found in the cell inner membrane. In terms of biological role, an essential GTPase that binds both GDP and GTP, with rapid nucleotide exchange. Plays a role in 16S rRNA processing and 30S ribosomal subunit biogenesis and possibly also in cell cycle regulation and energy metabolism. This is GTPase Era from Shigella flexneri serotype 5b (strain 8401).